A 320-amino-acid chain; its full sequence is ATP synthase gamma chain (320 aa).

Belongs to the ATPase gamma chain family. In terms of assembly, F-type ATPases have 2 components, CF(1) - the catalytic core - and CF(0) - the membrane proton channel. CF(1) has five subunits: alpha(3), beta(3), gamma(1), delta(1), epsilon(1). CF(0) has three main subunits: a, b and c.

The protein localises to the cell membrane. Produces ATP from ADP in the presence of a proton gradient across the membrane. The gamma chain is believed to be important in regulating ATPase activity and the flow of protons through the CF(0) complex. The sequence is that of ATP synthase gamma chain from Lactobacillus delbrueckii subsp. bulgaricus (strain ATCC 11842 / DSM 20081 / BCRC 10696 / JCM 1002 / NBRC 13953 / NCIMB 11778 / NCTC 12712 / WDCM 00102 / Lb 14).